Consider the following 779-residue polypeptide: Acyl-homoserine lactone acylase PvdQ (779 aa).

The first 25 residues, 1–25, serve as a signal peptide directing secretion; it reads MIISRPLCGFVFAGLSFAVILPAQA. Residues 202–223 constitute a propeptide, spacer peptide; the sequence is SQQVQALQLAAVRNQRFALERG. The active-site Nucleophile is Ser-224. Positions 731–746 are enriched in polar residues; sequence ESSNPQSAHSSDQTEA. Residues 731–752 are disordered; the sequence is ESSNPQSAHSSDQTEAFSKKQW.

This sequence belongs to the peptidase S45 family. As to quaternary structure, heterodimer of an alpha subunit and a beta subunit processed from the same precursor.

The protein resides in the periplasm. The enzyme catalyses an N-acyl-L-homoserine lactone + H2O = L-homoserine lactone + a carboxylate. Functionally, catalyzes the deacylation of acyl-homoserine lactone (AHL or acyl-HSL), releasing homoserine lactone (HSL) and the corresponding fatty acid. Possesses a specificity for the degradation of long-chain acyl-HSLs (side chains of 11 to 14 carbons in length). The polypeptide is Acyl-homoserine lactone acylase PvdQ (pvdQ) (Pseudomonas savastanoi pv. phaseolicola (strain 1448A / Race 6) (Pseudomonas syringae pv. phaseolicola (strain 1448A / Race 6))).